Consider the following 417-residue polypeptide: Adenosylhomocysteinase (417 aa).

Substrate is bound by residues Thr53, Asp125, and Glu149. Thr150–Thr152 contacts NAD(+). Lys179 and Asp183 together coordinate substrate. Residues Asn184, Gly213–Gly218, Glu236, Asn271, Ala292–His294, and Asn339 each bind NAD(+).

It belongs to the adenosylhomocysteinase family. It depends on NAD(+) as a cofactor.

The protein localises to the cytoplasm. The enzyme catalyses S-adenosyl-L-homocysteine + H2O = L-homocysteine + adenosine. Its pathway is amino-acid biosynthesis; L-homocysteine biosynthesis; L-homocysteine from S-adenosyl-L-homocysteine: step 1/1. May play a key role in the regulation of the intracellular concentration of adenosylhomocysteine. The protein is Adenosylhomocysteinase of Saccharolobus solfataricus (strain ATCC 35092 / DSM 1617 / JCM 11322 / P2) (Sulfolobus solfataricus).